A 331-amino-acid polypeptide reads, in one-letter code: Lipoate-protein ligase LplJ (331 aa).

Residues 27-214 enclose the BPL/LPL catalytic domain; it reads DPEQQYLLFY…HIFNTNDVGN (188 aa). Residues Arg-69, 74 to 77, and Lys-131 contribute to the ATP site; that span reads GAVY. Lys-131 contributes to the (R)-lipoate binding site.

This sequence belongs to the LplA family.

It is found in the cytoplasm. It carries out the reaction L-lysyl-[lipoyl-carrier protein] + (R)-lipoate + ATP = N(6)-[(R)-lipoyl]-L-lysyl-[lipoyl-carrier protein] + AMP + diphosphate + H(+). It functions in the pathway protein modification; protein lipoylation via exogenous pathway; protein N(6)-(lipoyl)lysine from lipoate: step 1/2. Its pathway is protein modification; protein lipoylation via exogenous pathway; protein N(6)-(lipoyl)lysine from lipoate: step 2/2. In terms of biological role, catalyzes both the ATP-dependent activation of exogenously supplied lipoate to lipoyl-AMP and the transfer of the activated lipoyl onto the lipoyl domains of lipoate-dependent enzymes. Is also able to use octanoate as substrate. The polypeptide is Lipoate-protein ligase LplJ (lplJ) (Bacillus subtilis (strain 168)).